The chain runs to 322 residues: NADH-quinone oxidoreductase subunit H (322 aa).

The next 8 membrane-spanning stretches (helical) occupy residues Ile15–Val35, Ile81–Ile101, Ile114–Gly134, Ala149–Ala169, Ile184–Leu204, Phe237–Phe257, Phe265–Ile285, and Leu299–Ile319.

It belongs to the complex I subunit 1 family. NDH-1 is composed of 13 different subunits. Subunits NuoA, H, J, K, L, M, N constitute the membrane sector of the complex.

The protein localises to the cell membrane. The enzyme catalyses a quinone + NADH + 5 H(+)(in) = a quinol + NAD(+) + 4 H(+)(out). Its function is as follows. NDH-1 shuttles electrons from NADH, via FMN and iron-sulfur (Fe-S) centers, to quinones in the respiratory chain. The immediate electron acceptor for the enzyme in this species is believed to be ubiquinone. Couples the redox reaction to proton translocation (for every two electrons transferred, four hydrogen ions are translocated across the cytoplasmic membrane), and thus conserves the redox energy in a proton gradient. This subunit may bind ubiquinone. This Buchnera aphidicola subsp. Baizongia pistaciae (strain Bp) protein is NADH-quinone oxidoreductase subunit H.